A 43-amino-acid polypeptide reads, in one-letter code: Gene 75 protein (43 aa).

In Mycobacterium (Mycobacteriophage L5), this protein is Gene 75 protein (75).